Consider the following 260-residue polypeptide: MVLIRVLANLLILQLSYAQKASELIIGGDECNINEHRFLVALYTSRSRRFHCSGTLINQEWVLTAANCDRKNIRIKLGMHSKNVTNEDEQTRVPKEKFFCLSSKTYTKWDKDIMLIRLKRPVNDSPHIAPISLPSSPPSVGSVCRIMGWGTISPTKVSYPDVPHCANINLLDYEVCRAAHGGLPATSRTLCAGILEGGKDSCQGDSGGPLICNGQFQGILSWGVHPCGQRLKPGVYTKVSDYTEWIRSIIAGNTDVTCPP.

An N-terminal signal peptide occupies residues M1–A18. A propeptide spanning residues Q19–L24 is cleaved from the precursor. Residues I25 to A251 form the Peptidase S1 domain. Cystine bridges form between C31–C165, C52–C68, C100–C258, C144–C212, C176–C191, and C202–C227. Residue N83 is glycosylated (N-linked (GlcNAc...) asparagine).

The protein belongs to the peptidase S1 family. Snake venom subfamily. Expressed by the venom gland.

The protein localises to the secreted. Snake venom serine protease homolog that may act in the hemostasis system of the prey. This is Snake venom serine protease homolog from Bothrops jararacussu (Jararacussu).